Consider the following 351-residue polypeptide: Nuclear inhibitor of protein phosphatase 1 (351 aa).

The interval 1–142 (MAAAANSGSS…LPSAVKGDEK (142 aa)) is interaction with CDC5L, SF3B1 and MELK. The FHA domain maps to 49–101 (YLFGRNPDLCDFTIDHQSCSRVHAALVYHKHLKRVFLIDLNSTHGTFLGHIRL). The segment at 143 to 224 (MGGEDDELKG…VDPSVGRFRN (82 aa)) is interaction with EED. Position 161 is a phosphothreonine (Thr-161). A phosphoserine mark is found at Ser-178 and Ser-199. 2 consecutive short sequence motifs (nuclear localization signal) follow at residues 185–209 (GNLDIQRPKRKRKNSRVTFSEDDEI) and 210–240 (INPEDVDPSVGRFRNMVQTAVVPVKKKRVEG). The segment at 191-200 (RPKRKRKNSR) is involved in PP-1 inhibition. Positions 200-203 (RVTF) are involved in PP-1 binding. Ser-204 is modified (phosphoserine). Ser-249 is subject to Phosphoserine. The residue at position 264 (Tyr-264) is a Phosphotyrosine; by LYN; in vitro. The interval 310 to 329 (AVNMNPAPNPAVYNPEAVNE) is interaction with EED. The interval 316–351 (APNPAVYNPEAVNEPKKKKYAKEAWPGKKPTPSLLI) is disordered. Positions 330–351 (PKKKKYAKEAWPGKKPTPSLLI) are RNA-binding. Residues 331 to 337 (KKKKYAK) form an involved in PP-1 inhibition region. Phosphotyrosine is present on Tyr-335.

As to quaternary structure, interacts with phosphorylated CDC5L, SF3B1 and MELK. Interacts with EED, in a nucleic acid-stimulated manner. Part of a complex consisting of PPP1R8, EED, HDAC2 and PP-1. Part of the spliceosome. Interacts with PPP1CA, PPP1CB and PPP1CC. It depends on Mg(2+) as a cofactor. In terms of processing, may be inactivated by phosphorylation on Ser-199 or Ser-204. Phosphorylated by Lyn in vitro on Tyr-264, and also on Tyr-335 in the presence of RNA. In terms of tissue distribution, ubiquitously expressed, with highest levels in heart and skeletal muscle, followed by brain, placenta, lung, liver and pancreas. Less abundant in kidney. The concentration and ratio between isoforms is cell-type dependent. Isoform Alpha (&gt;90%) and isoform Beta were found in brain, heart and kidney. Isoform Gamma is mainly found in B-cells and T-lymphocytes, and has been found in 293 embryonic kidney cells.

It is found in the nucleus. Its subcellular location is the nucleus speckle. The protein localises to the cytoplasm. In terms of biological role, inhibitor subunit of the major nuclear protein phosphatase-1 (PP-1). It has RNA-binding activity but does not cleave RNA and may target PP-1 to RNA-associated substrates. May also be involved in pre-mRNA splicing. Binds DNA and might act as a transcriptional repressor. Seems to be required for cell proliferation. Its function is as follows. Isoform Gamma is a site-specific single-strand endoribonuclease that cleaves single strand RNA 3' to purines and pyrimidines in A+U-rich regions. It generates 5'-phosphate termini at the site of cleavage. This isoform does not inhibit PP-1. May be implicated in mRNA splicing. The protein is Nuclear inhibitor of protein phosphatase 1 (PPP1R8) of Homo sapiens (Human).